A 319-amino-acid chain; its full sequence is MQVTFLGTSSGVPTRARNVSAVALRLPQRSEMWLFDCGEGTQHQFLRSDLRLSQLRRVFITHMHGDHVFGLPGLLASLGLAGSSSAGVDLYGPDPLESYLNGVLRTSSTRIGYPLAVHRVRDAAEQGTLLFEDDDFTVRCTLLTHRVPAYAYRIEQKPLAGRFDIEKARELNIPPGPVYAQLKRGETVTLEDGRSIDGTSLCGEERPGVSVVYCTDTVFCEAAIELARGADLLIHESTFAHGEAEMAFQKQHSTSTMAAQTAAEAGVGQLVLTHLSPRYVLGNPVTPQDLLNEAKAIFPNTLLAKDFLSIDVKPRCNSS.

Zn(2+) contacts are provided by His-62, His-64, Asp-66, His-67, His-145, Asp-216, and His-274. The active-site Proton acceptor is Asp-66.

The protein belongs to the RNase Z family. In terms of assembly, homodimer. Zn(2+) serves as cofactor.

The catalysed reaction is Endonucleolytic cleavage of RNA, removing extra 3' nucleotides from tRNA precursor, generating 3' termini of tRNAs. A 3'-hydroxy group is left at the tRNA terminus and a 5'-phosphoryl group is left at the trailer molecule.. Functionally, zinc phosphodiesterase, which displays some tRNA 3'-processing endonuclease activity. Probably involved in tRNA maturation, by removing a 3'-trailer from precursor tRNA. The polypeptide is Ribonuclease Z (Synechococcus sp. (strain CC9605)).